Here is a 46-residue protein sequence, read N- to C-terminus: Osteocalcin 2 (46 aa).

In terms of domain architecture, Gla spans 1–43; sequence AVPAGTLSPLQMESLREVCEVNVACDEMADTAGIVAAYTXFYG. T6 is modified (phosphothreonine). Residues E13, E17, E20, and D26 each coordinate Ca(2+). Residues E13, E17, and E20 each carry the 4-carboxyglutamate modification. Cysteines 19 and 25 form a disulfide. Position 27 is a 4-carboxyglutamate (E27).

It belongs to the osteocalcin/matrix Gla protein family. In terms of processing, gamma-carboxyglutamate residues are formed by vitamin K dependent carboxylation by GGCX. These residues are essential for the binding of calcium.

The protein resides in the secreted. The carboxylated form is one of the main organic components of the bone matrix, which constitutes 1-2% of the total bone protein. The carboxylated form binds strongly to apatite and calcium. This is Osteocalcin 2 from Solea senegalensis (Senegalese sole).